The chain runs to 203 residues: uncharacterized protein (203 aa).

Residues 90–188 (EKRQHVRVQP…YENIIGRYVM (99 aa)) form the PilZ domain.

To A.aeolicus aq_820 and aq_1583.

This is an uncharacterized protein from Aquifex aeolicus (strain VF5).